A 347-amino-acid polypeptide reads, in one-letter code: Quinolinate synthase (347 aa).

Iminosuccinate-binding residues include His-47 and Ser-68. Position 113 (Cys-113) interacts with [4Fe-4S] cluster. Iminosuccinate-binding positions include 139–141 and Ser-156; that span reads YAN. Position 200 (Cys-200) interacts with [4Fe-4S] cluster. Iminosuccinate-binding positions include 226 to 228 and Thr-243; that span reads HPE. [4Fe-4S] cluster is bound at residue Cys-297.

This sequence belongs to the quinolinate synthase family. Type 1 subfamily. Requires [4Fe-4S] cluster as cofactor.

The protein resides in the cytoplasm. It carries out the reaction iminosuccinate + dihydroxyacetone phosphate = quinolinate + phosphate + 2 H2O + H(+). It participates in cofactor biosynthesis; NAD(+) biosynthesis; quinolinate from iminoaspartate: step 1/1. In terms of biological role, catalyzes the condensation of iminoaspartate with dihydroxyacetone phosphate to form quinolinate. The chain is Quinolinate synthase from Escherichia coli O139:H28 (strain E24377A / ETEC).